Consider the following 459-residue polypeptide: Xylose/arabinose-binding protein XacG (459 aa).

A helical membrane pass occupies residues 19-36 (ALTVGAAAGIAGCTGGGG). The segment at 27–68 (GIAGCTGGGGTETESTESGNGNGSGGSTDDTETSGSSSGESW) is disordered.

The protein belongs to the bacterial solute-binding protein 1 family. The complex is composed of two ATP-binding proteins (XacJ and XacK), two transmembrane proteins (XacH and XacI) and a solute-binding protein (XacG).

Its subcellular location is the cell membrane. Part of the ABC transporter complex XacGHIJK involved in the uptake of xylose and arabinose. The chain is Xylose/arabinose-binding protein XacG from Haloferax volcanii (strain ATCC 29605 / DSM 3757 / JCM 8879 / NBRC 14742 / NCIMB 2012 / VKM B-1768 / DS2) (Halobacterium volcanii).